The following is a 535-amino-acid chain: Beta-amylase 1, chloroplastic (535 aa).

A chloroplast-targeting transit peptide spans 1 to 36; the sequence is MALNLAQSAAAAACFATAGDARRAASVVAMPSSSSS. Substrate is bound by residues Asp115, His155, and Asp163. Glu247 (proton donor) is an active-site residue. Lys361, His366, and Thr408 together coordinate substrate. The active-site Proton acceptor is Glu446. Residues 447–448 and Arg480 each bind substrate; that span reads NA.

The protein belongs to the glycosyl hydrolase 14 family.

It localises to the plastid. The protein localises to the chloroplast. It carries out the reaction Hydrolysis of (1-&gt;4)-alpha-D-glucosidic linkages in polysaccharides so as to remove successive maltose units from the non-reducing ends of the chains.. Possesses beta-amylase activity in vitro. May be involved in cold resistance by mediating the accumulation of maltose upon freezing stress, thus contributing to the protection of membranes. This is Beta-amylase 1, chloroplastic from Oryza sativa subsp. japonica (Rice).